Reading from the N-terminus, the 489-residue chain is Alpha-amylase (489 aa).

The N-terminal stretch at 1 to 16 (HFKPILVLCLATLALG) is a signal peptide. C44 and C102 form a disulfide bridge. Residues N116, R164, and D173 each coordinate Ca(2+). C152 and C166 are disulfide-bonded. R201 lines the chloride pocket. The active-site Nucleophile is D203. H207 serves as a coordination point for Ca(2+). The active-site Proton donor is the E240. Residues N303 and R339 each coordinate chloride. 2 disulfides stabilise this stretch: C372-C378 and C443-C455.

It belongs to the glycosyl hydrolase 13 family. As to quaternary structure, monomer. It depends on Ca(2+) as a cofactor. The cofactor is chloride.

It carries out the reaction Endohydrolysis of (1-&gt;4)-alpha-D-glucosidic linkages in polysaccharides containing three or more (1-&gt;4)-alpha-linked D-glucose units.. In Tribolium castaneum (Red flour beetle), this protein is Alpha-amylase.